The sequence spans 454 residues: Bifunctional protein GlmU (454 aa).

The segment at Met1 to Lys225 is pyrophosphorylase. Residues Leu6–Gly9, Lys20, Gln71, Gly76–Thr77, Tyr98–Asp100, Gly135, Glu150, Asn165, and Asn223 contribute to the UDP-N-acetyl-alpha-D-glucosamine site. Asp100 is a Mg(2+) binding site. Mg(2+) is bound at residue Asn223. The tract at residues Val226–Thr246 is linker. Positions Gly247–Gln454 are N-acetyltransferase. Positions 329 and 347 each coordinate UDP-N-acetyl-alpha-D-glucosamine. Catalysis depends on His359, which acts as the Proton acceptor. Positions 362 and 373 each coordinate UDP-N-acetyl-alpha-D-glucosamine. Acetyl-CoA is bound by residues Ala376, Asn382–Tyr383, Ser401, Ala419, and Arg436.

This sequence in the N-terminal section; belongs to the N-acetylglucosamine-1-phosphate uridyltransferase family. The protein in the C-terminal section; belongs to the transferase hexapeptide repeat family. Homotrimer. Requires Mg(2+) as cofactor.

The protein localises to the cytoplasm. It carries out the reaction alpha-D-glucosamine 1-phosphate + acetyl-CoA = N-acetyl-alpha-D-glucosamine 1-phosphate + CoA + H(+). The catalysed reaction is N-acetyl-alpha-D-glucosamine 1-phosphate + UTP + H(+) = UDP-N-acetyl-alpha-D-glucosamine + diphosphate. It participates in nucleotide-sugar biosynthesis; UDP-N-acetyl-alpha-D-glucosamine biosynthesis; N-acetyl-alpha-D-glucosamine 1-phosphate from alpha-D-glucosamine 6-phosphate (route II): step 2/2. It functions in the pathway nucleotide-sugar biosynthesis; UDP-N-acetyl-alpha-D-glucosamine biosynthesis; UDP-N-acetyl-alpha-D-glucosamine from N-acetyl-alpha-D-glucosamine 1-phosphate: step 1/1. Its pathway is bacterial outer membrane biogenesis; LPS lipid A biosynthesis. Catalyzes the last two sequential reactions in the de novo biosynthetic pathway for UDP-N-acetylglucosamine (UDP-GlcNAc). The C-terminal domain catalyzes the transfer of acetyl group from acetyl coenzyme A to glucosamine-1-phosphate (GlcN-1-P) to produce N-acetylglucosamine-1-phosphate (GlcNAc-1-P), which is converted into UDP-GlcNAc by the transfer of uridine 5-monophosphate (from uridine 5-triphosphate), a reaction catalyzed by the N-terminal domain. The chain is Bifunctional protein GlmU from Cupriavidus pinatubonensis (strain JMP 134 / LMG 1197) (Cupriavidus necator (strain JMP 134)).